We begin with the raw amino-acid sequence, 148 residues long: Large ribosomal subunit protein bL9 (148 aa).

Belongs to the bacterial ribosomal protein bL9 family.

In terms of biological role, binds to the 23S rRNA. The chain is Large ribosomal subunit protein bL9 from Desulfitobacterium hafniense (strain DSM 10664 / DCB-2).